Consider the following 156-residue polypeptide: Probable cyclic pyranopterin monophosphate synthase (156 aa).

Substrate contacts are provided by residues 73-75 and 109-110; these read MCH and ME. The active site involves aspartate 124.

Belongs to the MoaC family. In terms of assembly, homohexamer; trimer of dimers.

The enzyme catalyses (8S)-3',8-cyclo-7,8-dihydroguanosine 5'-triphosphate = cyclic pyranopterin phosphate + diphosphate. It functions in the pathway cofactor biosynthesis; molybdopterin biosynthesis. Functionally, catalyzes the conversion of (8S)-3',8-cyclo-7,8-dihydroguanosine 5'-triphosphate to cyclic pyranopterin monophosphate (cPMP). The polypeptide is Probable cyclic pyranopterin monophosphate synthase (Archaeoglobus fulgidus (strain ATCC 49558 / DSM 4304 / JCM 9628 / NBRC 100126 / VC-16)).